Consider the following 502-residue polypeptide: MTEKKYIVALDQGTTSSRAVVMDHDANIISVSQREFEQIYPKPGWVEHDPMEIWATQSSTLVEVLAKADISSDQIAAIGITNQRETTIVWEKETGKPIYNAIVWQCRRTAEICEHLKRDGLEDYIRSNTGLVIDPYFSGTKVKWILDHVEGSRERARRGELLFGTVDTWLIWKMTQGRVHVTDYTNASRTMLFNIHTLGWDDKMLEVLDIPREMLPEVRRSSEVYGQTNIGGKGGTRIPISGIAGDQQAALFGQLCVKEGMAKNTYGTGCFMLMNTGEKAVKSENGLLTTIACGPTGEVNYALEGAVFMAGASIQWLRDEMKLINDAYDSEYFATKVQNTNGVYVVPAFTGLGAPYWDPYARGAIFGLTRGVNANHIIRATLESIAYQTRDVLEAMQADSGIRLHALRVDGGAVANNFLMQFQSDILGTRVERPEVREVTALGAAYLAGLAVGFWQNLDELQEKAVIEREFRPGIETTERNYRYAGWKKAVKRAMAWEKHDE.

Thr-14 is a binding site for ADP. The ATP site is built by Thr-14, Thr-15, and Ser-16. Thr-14 provides a ligand contact to sn-glycerol 3-phosphate. ADP is bound at residue Arg-18. Positions 84, 85, 136, and 246 each coordinate sn-glycerol 3-phosphate. Glycerol contacts are provided by Arg-84, Glu-85, Tyr-136, Asp-246, and Gln-247. 2 residues coordinate ADP: Thr-268 and Gly-311. 4 residues coordinate ATP: Thr-268, Gly-311, Gln-315, and Gly-412. Positions 412 and 416 each coordinate ADP.

The protein belongs to the FGGY kinase family. In terms of assembly, homotetramer and homodimer (in equilibrium). Heterodimer with EIIA-Glc. Binds 1 zinc ion per glycerol kinase EIIA-Glc dimer. The zinc ion is important for dimerization.

It catalyses the reaction glycerol + ATP = sn-glycerol 3-phosphate + ADP + H(+). It functions in the pathway polyol metabolism; glycerol degradation via glycerol kinase pathway; sn-glycerol 3-phosphate from glycerol: step 1/1. Activity of this regulatory enzyme is affected by several metabolites. Allosterically and non-competitively inhibited by fructose 1,6-bisphosphate (FBP) and unphosphorylated phosphocarrier protein EIIA-Glc (III-Glc), an integral component of the bacterial phosphotransferase (PTS) system. In terms of biological role, key enzyme in the regulation of glycerol uptake and metabolism. Catalyzes the phosphorylation of glycerol to yield sn-glycerol 3-phosphate. In Shigella boydii serotype 18 (strain CDC 3083-94 / BS512), this protein is Glycerol kinase.